We begin with the raw amino-acid sequence, 306 residues long: Cell division protein ZipA (306 aa).

The Periplasmic segment spans residues Met-1 to Leu-6. A helical membrane pass occupies residues Val-7–Ile-27. Residues Arg-28–Ala-306 lie on the Cytoplasmic side of the membrane.

Belongs to the ZipA family. Interacts with FtsZ via their C-terminal domains.

The protein localises to the cell inner membrane. In terms of biological role, essential cell division protein that stabilizes the FtsZ protofilaments by cross-linking them and that serves as a cytoplasmic membrane anchor for the Z ring. Also required for the recruitment to the septal ring of downstream cell division proteins. This Shewanella halifaxensis (strain HAW-EB4) protein is Cell division protein ZipA.